Consider the following 460-residue polypeptide: ATP synthase subunit beta (460 aa).

An ATP-binding site is contributed by glycine 150–threonine 157.

Belongs to the ATPase alpha/beta chains family. As to quaternary structure, F-type ATPases have 2 components, CF(1) - the catalytic core - and CF(0) - the membrane proton channel. CF(1) has five subunits: alpha(3), beta(3), gamma(1), delta(1), epsilon(1). CF(0) has three main subunits: a(1), b(2) and c(9-12). The alpha and beta chains form an alternating ring which encloses part of the gamma chain. CF(1) is attached to CF(0) by a central stalk formed by the gamma and epsilon chains, while a peripheral stalk is formed by the delta and b chains.

Its subcellular location is the cell inner membrane. It carries out the reaction ATP + H2O + 4 H(+)(in) = ADP + phosphate + 5 H(+)(out). Functionally, produces ATP from ADP in the presence of a proton gradient across the membrane. The catalytic sites are hosted primarily by the beta subunits. The chain is ATP synthase subunit beta from Citrobacter koseri (strain ATCC BAA-895 / CDC 4225-83 / SGSC4696).